Reading from the N-terminus, the 61-residue chain is Sec-independent protein translocase protein TatA (61 aa).

The helical transmembrane segment at 1-21 (MFGIGMPELIVILVIVLVVFG) threads the bilayer.

This sequence belongs to the TatA/E family. As to quaternary structure, the Tat system comprises two distinct complexes: a TatABC complex, containing multiple copies of TatA, TatB and TatC subunits, and a separate TatA complex, containing only TatA subunits. Substrates initially bind to the TatABC complex, which probably triggers association of the separate TatA complex to form the active translocon.

The protein resides in the cell inner membrane. Its function is as follows. Part of the twin-arginine translocation (Tat) system that transports large folded proteins containing a characteristic twin-arginine motif in their signal peptide across membranes. TatA could form the protein-conducting channel of the Tat system. The polypeptide is Sec-independent protein translocase protein TatA (Geobacter metallireducens (strain ATCC 53774 / DSM 7210 / GS-15)).